Here is a 244-residue protein sequence, read N- to C-terminus: Protein HRI1 (244 aa).

A Phosphoserine modification is found at Ser-143.

It belongs to the HRI1 family. Interacts with HRR25. May interact with SEC72.

Its subcellular location is the cytoplasm. The protein localises to the nucleus. Functionally, unknown. Non essential. The sequence is that of Protein HRI1 (HRI1) from Saccharomyces cerevisiae (strain ATCC 204508 / S288c) (Baker's yeast).